The sequence spans 139 residues: Cytochrome c-type biogenesis protein CcmE (139 aa).

The Cytoplasmic segment spans residues 1-7 (MTKRQNR). Residues 8–28 (MTLVALLVIGVSLTGYLGLKA) form a helical; Signal-anchor for type II membrane protein membrane-spanning segment. The Periplasmic segment spans residues 29 to 139 (FNENLLYFFS…ADALEKAKNK (111 aa)). Heme contacts are provided by histidine 120 and tyrosine 124.

Belongs to the CcmE/CycJ family.

It localises to the cell inner membrane. Heme chaperone required for the biogenesis of c-type cytochromes. Transiently binds heme delivered by CcmC and transfers the heme to apo-cytochromes in a process facilitated by CcmF and CcmH. This chain is Cytochrome c-type biogenesis protein CcmE, found in Ruthia magnifica subsp. Calyptogena magnifica.